A 617-amino-acid polypeptide reads, in one-letter code: Lipoteichoic acid synthase-like YvgJ (617 aa).

At 1-10 (MKGTFFHNQR) the chain is on the cytoplasmic side. The helical transmembrane segment at 11 to 31 (FLCFSILFMWIKTYVIYKLGF) threads the bilayer. Residues 32 to 41 (DLQIDTLLEE) lie on the Extracellular side of the membrane. Residues 42-62 (LMLLVNPLSFILPLFGIGLFL) form a helical membrane-spanning segment. Over 63–68 (KENKQR) the chain is Cytoplasmic. Residues 69–89 (AFLLIANLVLTVILISNTIFY) traverse the membrane as a helical segment. Over 90 to 115 (GFYIDFITIPVLFQASNMSDMGSSVK) the chain is Extracellular. Residues 116 to 136 (ELFHPLFIALFVDLVFLLLFA) form a helical membrane-spanning segment. The Cytoplasmic portion of the chain corresponds to 137 to 153 (RKTKHPQTKAAPHTIKR). A helical transmembrane segment spans residues 154–171 (YYAASCGMLLCTLALAEV). At 172–617 (QQPKLLAHSF…LNGDLLRFSE (446 aa)) the chain is on the extracellular side. Mn(2+)-binding residues include Glu251 and Thr293. Thr293 is a catalytic residue. His408 contributes to the substrate binding site. Mn(2+) contacts are provided by Asp467 and His468.

The protein belongs to the LTA synthase family. In terms of processing, proteolytically cleaved.

The protein localises to the cell membrane. The protein resides in the secreted. In Bacillus subtilis (strain 168), this protein is Lipoteichoic acid synthase-like YvgJ (yvgJ).